Here is a 785-residue protein sequence, read N- to C-terminus: Semaphorin-3E (785 aa).

A signal peptide spans 1 to 25; that stretch reads MLGRMASAQDLLILALCGLLLELPA. In terms of domain architecture, Sema spans 36–520; sequence RLRLSHKELW…TESVIAQVKF (485 aa). Asparagine 48 carries an N-linked (GlcNAc...) asparagine glycan. Cysteines 109 and 119 form a disulfide. Asparagine 130 is a glycosylation site (N-linked (GlcNAc...) asparagine). Disulfide bonds link cysteine 137-cysteine 146, cysteine 274-cysteine 386, cysteine 298-cysteine 346, and cysteine 523-cysteine 541. An N-linked (GlcNAc...) asparagine glycan is attached at asparagine 600. In terms of domain architecture, Ig-like C2-type spans 651 to 740; that stretch reads LDAGTYFCQT…EYCEKVWCTD (90 aa). Cysteines 658 and 733 form a disulfide. A disordered region spans residues 744-785; it reads KKLKMSPSKWKYANPQEKRQDQEKKARIRPEHYRLPRNIADS. Positions 759-777 are enriched in basic and acidic residues; it reads QEKRQDQEKKARIRPEHYR.

It belongs to the semaphorin family. As to expression, collapsin-1, -2, -3, and -5 bind to overlapping but distinct axon tracts.

It localises to the secreted. Plays an important role in signaling via the cell surface receptor PLXND1. Mediates reorganization of the actin cytoskeleton, leading to the retraction of cell projections. Promotes focal adhesion disassembly and inhibits adhesion of endothelial cells to the extracellular matrix. Regulates angiogenesis. Can down-regulate sprouting angiogenesis. Required for normal vascular patterning during embryogenesis. Induces the collapse and paralysis of neuronal growth cones. Plays an important role in ensuring the specificity of synapse formation. The protein is Semaphorin-3E (SEMA3E) of Gallus gallus (Chicken).